The following is a 321-amino-acid chain: MIFLTLEHILTHISFSVVSIVIIIHFLTLLVNEFVGLYDSSEKGMLTTFFCLTGLLITRWIYSGHLPISDLYESLIFLSWIFSIIHMVPYFKKHKNYLSTITAPSTFFTQGFATWGLLTDMHQSKILVPALQSQWLIMHVSMMVSGYAALLCGSLLSAALLVITFRKVIRIVGKNNNLLNDSFPVDEIQYMMEKKSILKNTFFPSSRNYYRFQLIQQLDHWGFRILSIGFLFLTIGILSGAVWANEAWGSYWNWDPKETWAFITWTIFAIYFHTRTNKNLEGLNSAIVASIGFLIIWICYFGVNLLGIGLHSYGSFTLISN.

A run of 8 helical transmembrane segments spans residues 17-37 (VVSI…FVGL), 48-68 (TFFC…HLPI), 71-91 (LYES…VPYF), 98-118 (LSTI…WGLL), 143-163 (MVSG…LLVI), 225-245 (ILSI…VWAN), 259-273 (TWAF…IYFH), and 286-306 (AIVA…VNLL).

It belongs to the CcmF/CycK/Ccl1/NrfE/CcsA family. As to quaternary structure, may interact with Ccs1.

The protein resides in the plastid. It is found in the chloroplast thylakoid membrane. Functionally, required during biogenesis of c-type cytochromes (cytochrome c6 and cytochrome f) at the step of heme attachment. The chain is Cytochrome c biogenesis protein CcsA from Populus trichocarpa (Western balsam poplar).